A 362-amino-acid polypeptide reads, in one-letter code: GDSL esterase/lipase At5g22810 (362 aa).

The N-terminal stretch at 1-28 (MGFSGIWLNLYVVFGSLMVFERMVVMVV) is a signal peptide. Ser-44 acts as the Nucleophile in catalysis. N-linked (GlcNAc...) asparagine glycosylation is found at Asn-159, Asn-162, Asn-264, and Asn-329. Residues Asp-337 and His-340 contribute to the active site.

This sequence belongs to the 'GDSL' lipolytic enzyme family.

The protein resides in the secreted. In Arabidopsis thaliana (Mouse-ear cress), this protein is GDSL esterase/lipase At5g22810.